The primary structure comprises 776 residues: Systemic RNA interference defective protein 1 (776 aa).

Positions 1 to 17 (MIRVYLIILMHLVIGLT) are cleaved as a signal peptide. Over 18–319 (QNNSTTPSPI…ENQSYAVPTA (302 aa)) the chain is Extracellular. N-linked (GlcNAc...) asparagine glycosylation is found at N19, N20, N32, N205, N210, N234, N290, and N311. An involved in dsRNA-binding region spans residues 22-312 (TTPSPIITSS…SFEFKKLENQ (291 aa)). The helical transmembrane segment at 320 to 340 (LMMIFLTTPCLLFLPIVINII) threads the bilayer. The Cytoplasmic segment spans residues 341 to 429 (KNSRKLAPSQ…KQDSLSLHGQ (89 aa)). The tract at residues 360–390 (PSEQRDMDLSHDEQQNTSSELENNGEIPAAE) is disordered. The span at 362–373 (EQRDMDLSHDEQ) shows a compositional bias: basic and acidic residues. The helical transmembrane segment at 430 to 450 (MLQYPVAIILPVLMHTAIEFH) threads the bilayer. The Extracellular segment spans residues 451-481 (KWTTSTMANRDEMCFHNHACARPLGELRAWN). A helical membrane pass occupies residues 482 to 502 (NIITNIGYTLYGAIFIVLSIC). At 503 to 510 (RRGRHEYS) the chain is on the cytoplasmic side. A helical membrane pass occupies residues 511–531 (HVFGTYECTLLDVTIGVFMVL). At 532–543 (QSIASATYHICP) the chain is on the extracellular side. The chain crosses the membrane as a helical span at residues 544-564 (SDVAFQFDTPCIQVICGLLMV). Residues 565–575 (RQWFVRHESPS) lie on the Cytoplasmic side of the membrane. The chain crosses the membrane as a helical span at residues 576-596 (PAYTNILLVGVVSLNFLISAF). Over 597–599 (SKT) the chain is Extracellular. A helical membrane pass occupies residues 600–620 (SYVRFIIAVIHVIVVGSICLA). Residues 621–633 (KERSLGSEKLKTR) lie on the Cytoplasmic side of the membrane. A helical membrane pass occupies residues 634 to 654 (FFIMAFSMGNFAAIVMYLTLS). Topologically, residues 655–659 (AFHLN) are extracellular. The chain crosses the membrane as a helical span at residues 660–680 (QIATYCFIINCIMYLMYYGCM). The Cytoplasmic segment spans residues 681-691 (KVLHSERITSK). A helical membrane pass occupies residues 692-712 (AKLCGALSLLAWAVAGFFFFQ). Residues 713–741 (DDTDWTRSAAASRALNKPCLLLGFFGSHD) lie on the Extracellular side of the membrane. The chain crosses the membrane as a helical span at residues 742–762 (LWHIFGALAGLFTFIFVSFVD). Residues 763 to 776 (DDLINTRKTSINIF) are Cytoplasmic-facing.

Belongs to the SID1 family. As to quaternary structure, may self-associate to form multimers. As to expression, expressed in most non-neuronal cells, including body wall muscle cells.

It is found in the cell membrane. Its function is as follows. Plays a role in RNA-mediated gene silencing by acting cell-autonomously as a channel for the transport of double-stranded RNA (dsRNA) between cells. Mediates the spread of dsRNA and subsequent silencing of genes in cells distant from the site of dsRNA introduction. Selective for dsRNA. Preferentially binds long dsRNA, from 50 base pairs up to 700. Short 20 base-pair long molecules are not bound. May also bind dsDNA, but with lower affinity. Binding may be sequence-independent. Required for avoidance behavior induced by small RNAs derived from pathogenic bacteria such as P.aeruginosa. The chain is Systemic RNA interference defective protein 1 from Caenorhabditis elegans.